We begin with the raw amino-acid sequence, 65 residues long: Large ribosomal subunit protein bL35 (65 aa).

The protein belongs to the bacterial ribosomal protein bL35 family.

This is Large ribosomal subunit protein bL35 from Borrelia turicatae (strain 91E135).